A 363-amino-acid polypeptide reads, in one-letter code: tRNA N6-adenosine threonylcarbamoyltransferase (363 aa).

Fe cation-binding residues include histidine 127 and histidine 131. Residues leucine 150–glycine 154, aspartate 183, glycine 196, and asparagine 290 each bind substrate. Aspartate 318 contacts Fe cation.

The protein belongs to the KAE1 / TsaD family. Requires Fe(2+) as cofactor.

The protein localises to the cytoplasm. The catalysed reaction is L-threonylcarbamoyladenylate + adenosine(37) in tRNA = N(6)-L-threonylcarbamoyladenosine(37) in tRNA + AMP + H(+). In terms of biological role, required for the formation of a threonylcarbamoyl group on adenosine at position 37 (t(6)A37) in tRNAs that read codons beginning with adenine. Is involved in the transfer of the threonylcarbamoyl moiety of threonylcarbamoyl-AMP (TC-AMP) to the N6 group of A37, together with TsaE and TsaB. TsaD likely plays a direct catalytic role in this reaction. The protein is tRNA N6-adenosine threonylcarbamoyltransferase of Zymomonas mobilis subsp. mobilis (strain ATCC 31821 / ZM4 / CP4).